Consider the following 162-residue polypeptide: NADH-quinone oxidoreductase subunit I (162 aa).

2 4Fe-4S ferredoxin-type domains span residues 53–83 (LRRYPNGEERCIACKLCEAVCPALAITIESD) and 93–122 (TRYDIDLTKCIFCGFCEESCPVDSIVETHI). [4Fe-4S] cluster-binding residues include C63, C66, C69, C73, C102, C105, C108, and C112.

It belongs to the complex I 23 kDa subunit family. As to quaternary structure, NDH-1 is composed of 14 different subunits. Subunits NuoA, H, J, K, L, M, N constitute the membrane sector of the complex. Requires [4Fe-4S] cluster as cofactor.

Its subcellular location is the cell inner membrane. It catalyses the reaction a quinone + NADH + 5 H(+)(in) = a quinol + NAD(+) + 4 H(+)(out). In terms of biological role, NDH-1 shuttles electrons from NADH, via FMN and iron-sulfur (Fe-S) centers, to quinones in the respiratory chain. The immediate electron acceptor for the enzyme in this species is believed to be ubiquinone. Couples the redox reaction to proton translocation (for every two electrons transferred, four hydrogen ions are translocated across the cytoplasmic membrane), and thus conserves the redox energy in a proton gradient. This chain is NADH-quinone oxidoreductase subunit I, found in Bordetella avium (strain 197N).